Reading from the N-terminus, the 92-residue chain is Acylphosphatase (92 aa).

A disulfide bridge links Cys-5 with Cys-49. Residues 5–92 (CIIAWVYGRV…SGELTDFRIR (88 aa)) form the Acylphosphatase-like domain. Active-site residues include Arg-20 and Asn-38.

This sequence belongs to the acylphosphatase family.

The enzyme catalyses an acyl phosphate + H2O = a carboxylate + phosphate + H(+). The protein is Acylphosphatase of Escherichia coli O157:H7.